Reading from the N-terminus, the 406-residue chain is Arginine biosynthesis bifunctional protein ArgJ (406 aa).

6 residues coordinate substrate: threonine 152, lysine 179, threonine 190, glutamate 277, asparagine 401, and serine 406. The Nucleophile role is filled by threonine 190.

It belongs to the ArgJ family. As to quaternary structure, heterotetramer of two alpha and two beta chains.

Its subcellular location is the cytoplasm. The catalysed reaction is N(2)-acetyl-L-ornithine + L-glutamate = N-acetyl-L-glutamate + L-ornithine. It carries out the reaction L-glutamate + acetyl-CoA = N-acetyl-L-glutamate + CoA + H(+). The protein operates within amino-acid biosynthesis; L-arginine biosynthesis; L-ornithine and N-acetyl-L-glutamate from L-glutamate and N(2)-acetyl-L-ornithine (cyclic): step 1/1. It functions in the pathway amino-acid biosynthesis; L-arginine biosynthesis; N(2)-acetyl-L-ornithine from L-glutamate: step 1/4. Catalyzes two activities which are involved in the cyclic version of arginine biosynthesis: the synthesis of N-acetylglutamate from glutamate and acetyl-CoA as the acetyl donor, and of ornithine by transacetylation between N(2)-acetylornithine and glutamate. The protein is Arginine biosynthesis bifunctional protein ArgJ of Neisseria meningitidis serogroup A / serotype 4A (strain DSM 15465 / Z2491).